The sequence spans 776 residues: 5-methyltetrahydropteroyltriglutamate--homocysteine methyltransferase (776 aa).

Residues 16–19 (RELK) and K112 each bind 5-methyltetrahydropteroyltri-L-glutamate. L-homocysteine is bound by residues 435–437 (IGS) and E488. L-methionine contacts are provided by residues 435-437 (IGS) and E488. 5-methyltetrahydropteroyltri-L-glutamate contacts are provided by residues 519-520 (RC) and W565. Residue D603 participates in L-homocysteine binding. D603 contributes to the L-methionine binding site. E609 contributes to the 5-methyltetrahydropteroyltri-L-glutamate binding site. Residues H645, C647, and E669 each contribute to the Zn(2+) site. H698 serves as the catalytic Proton donor. Zn(2+) is bound at residue C730.

Belongs to the vitamin-B12 independent methionine synthase family. Requires Zn(2+) as cofactor.

The enzyme catalyses 5-methyltetrahydropteroyltri-L-glutamate + L-homocysteine = tetrahydropteroyltri-L-glutamate + L-methionine. It participates in amino-acid biosynthesis; L-methionine biosynthesis via de novo pathway; L-methionine from L-homocysteine (MetE route): step 1/1. Functionally, catalyzes the transfer of a methyl group from 5-methyltetrahydrofolate to homocysteine resulting in methionine formation. This is 5-methyltetrahydropteroyltriglutamate--homocysteine methyltransferase from Ralstonia pickettii (strain 12J).